Consider the following 357-residue polypeptide: Solute carrier family 25 member 3 (357 aa).

The N-terminal 45 residues, 1 to 45 (MFSSVAHLARANPFNAPHLQLVHDGLSGPRSPPAPPRRSRHLAAA), are a transit peptide targeting the mitochondrion. Residues 46–58 (AVEEYSCEFGSMK) lie on the Mitochondrial intermembrane side of the membrane. Solcar repeat units lie at residues 58–142 (KYYA…FKAL), 155–239 (WRTS…TVEA), and 256–334 (EQLV…VKVY). A helical transmembrane segment spans residues 59–81 (YYALCGFGGVLSCGLTHTAVVPL). Topologically, residues 82 to 116 (DLVKCRMQVDPQKYKGIFNGFSITLKEDGVRGLAK) are mitochondrial matrix. K94 is modified (N6-acetyllysine). Position 107 is an N6-methyllysine (K107). The helical transmembrane segment at 117–136 (GWAPTLIGYSMQGLCKFGFY) threads the bilayer. Residues 137-156 (EVFKALYSNILGEENTYLWR) are Mitochondrial intermembrane-facing. Residues 157–178 (TSLYLASSASAEFFADIALAPM) form a helical membrane-spanning segment. Residues 179–213 (EAAKVRIQTQPGYANTLREAVPKMYKEEGLNAFYK) are Mitochondrial matrix-facing. The residue at position 191 (Y191) is a Phosphotyrosine. K204 bears the N6-acetyllysine mark. A helical transmembrane segment spans residues 214–233 (GVAPLWMRQIPYTMMKFACF). At 234–256 (ERTVEALYKFVVPKPRSECTKAE) the chain is on the mitochondrial intermembrane side. A helical membrane pass occupies residues 257–279 (QLVVTFVAGYIAGVFCAIVSHPA). Topologically, residues 280–309 (DSVVSVLNKEKGSTASQVLQRLGFRGVWKG) are mitochondrial matrix. Residues 310 to 328 (LFARIIMIGTLTALQWFIY) traverse the membrane as a helical segment. Residues 329–357 (DSVKVYFRLPRPPPPEMPESLKKKLGLTE) are Mitochondrial intermembrane-facing.

It belongs to the mitochondrial carrier (TC 2.A.29) family. As to quaternary structure, interacts with PPIF; the interaction is impaired by CsA.

It is found in the mitochondrion inner membrane. The enzyme catalyses phosphate(in) + H(+)(in) = phosphate(out) + H(+)(out). Inorganic ion transporter that transports phosphate or copper ions across the mitochondrial inner membrane into the matrix compartment. Mediates proton-coupled symport of phosphate ions necessary for mitochondrial oxidative phosphorylation of ADP to ATP. Transports copper ions probably in the form of anionic copper(I) complexes to maintain mitochondrial matrix copper pool and to supply copper for cytochrome C oxidase complex assembly. May also play a role in regulation of the mitochondrial permeability transition pore (mPTP). The polypeptide is Solute carrier family 25 member 3 (Mus musculus (Mouse)).